The sequence spans 428 residues: uncharacterized protein (428 aa).

His68 is a Zn(2+) binding site. Residue Glu71 is the Proton acceptor of the active site. Zn(2+)-binding residues include His72 and Glu143.

Belongs to the peptidase M16 family. Zn(2+) is required as a cofactor.

This is an uncharacterized protein from Bacillus subtilis (strain 168).